The sequence spans 267 residues: DNA repair protein RecO (267 aa).

The protein belongs to the RecO family.

Its function is as follows. Involved in DNA repair and RecF pathway recombination. The chain is DNA repair protein RecO from Prochlorococcus marinus (strain MIT 9313).